We begin with the raw amino-acid sequence, 391 residues long: NADH-quinone oxidoreductase subunit D (391 aa).

Belongs to the complex I 49 kDa subunit family. NDH-1 is composed of 14 different subunits. Subunits NuoB, C, D, E, F, and G constitute the peripheral sector of the complex.

The protein localises to the cell inner membrane. The catalysed reaction is a quinone + NADH + 5 H(+)(in) = a quinol + NAD(+) + 4 H(+)(out). In terms of biological role, NDH-1 shuttles electrons from NADH, via FMN and iron-sulfur (Fe-S) centers, to quinones in the respiratory chain. The immediate electron acceptor for the enzyme in this species is believed to be ubiquinone. Couples the redox reaction to proton translocation (for every two electrons transferred, four hydrogen ions are translocated across the cytoplasmic membrane), and thus conserves the redox energy in a proton gradient. The polypeptide is NADH-quinone oxidoreductase subunit D (Rickettsia massiliae (strain Mtu5)).